A 356-amino-acid chain; its full sequence is DNA polymerase IV (356 aa).

The UmuC domain maps to 6–187 (IIHIDMDAFY…QPIRRLHGVG (182 aa)). Mg(2+) contacts are provided by Asp10 and Asp105. The active site involves Glu106.

The protein belongs to the DNA polymerase type-Y family. As to quaternary structure, monomer. The cofactor is Mg(2+).

It localises to the cytoplasm. It catalyses the reaction DNA(n) + a 2'-deoxyribonucleoside 5'-triphosphate = DNA(n+1) + diphosphate. Its function is as follows. Poorly processive, error-prone DNA polymerase involved in untargeted mutagenesis. Copies undamaged DNA at stalled replication forks, which arise in vivo from mismatched or misaligned primer ends. These misaligned primers can be extended by PolIV. Exhibits no 3'-5' exonuclease (proofreading) activity. May be involved in translesional synthesis, in conjunction with the beta clamp from PolIII. This chain is DNA polymerase IV, found in Halorhodospira halophila (strain DSM 244 / SL1) (Ectothiorhodospira halophila (strain DSM 244 / SL1)).